The sequence spans 443 residues: ATP-dependent protease ATPase subunit HslU (443 aa).

ATP-binding positions include Ile20, 62-67 (GVGKTE), Asp255, Glu321, and Arg393.

The protein belongs to the ClpX chaperone family. HslU subfamily. In terms of assembly, a double ring-shaped homohexamer of HslV is capped on each side by a ring-shaped HslU homohexamer. The assembly of the HslU/HslV complex is dependent on binding of ATP.

The protein resides in the cytoplasm. Its function is as follows. ATPase subunit of a proteasome-like degradation complex; this subunit has chaperone activity. The binding of ATP and its subsequent hydrolysis by HslU are essential for unfolding of protein substrates subsequently hydrolyzed by HslV. HslU recognizes the N-terminal part of its protein substrates and unfolds these before they are guided to HslV for hydrolysis. This chain is ATP-dependent protease ATPase subunit HslU, found in Helicobacter acinonychis (strain Sheeba).